The sequence spans 448 residues: tRNA modification GTPase MnmE (448 aa).

Residues arginine 25, glutamate 82, and lysine 121 each contribute to the (6S)-5-formyl-5,6,7,8-tetrahydrofolate site. The TrmE-type G domain maps to 217 to 372; the sequence is GLTTVIAGRP…LRQEIIRRAG (156 aa). Residue asparagine 227 participates in K(+) binding. GTP-binding positions include 227 to 232, 246 to 252, 271 to 274, and 353 to 355; these read NVGKSS, TEIPGTT, DTAG, and SAR. Serine 231 is a Mg(2+) binding site. K(+) is bound by residues threonine 246, isoleucine 248, and threonine 251. Threonine 252 serves as a coordination point for Mg(2+). Residue lysine 448 coordinates (6S)-5-formyl-5,6,7,8-tetrahydrofolate.

This sequence belongs to the TRAFAC class TrmE-Era-EngA-EngB-Septin-like GTPase superfamily. TrmE GTPase family. In terms of assembly, homodimer. Heterotetramer of two MnmE and two MnmG subunits. It depends on K(+) as a cofactor.

The protein localises to the cytoplasm. Functionally, exhibits a very high intrinsic GTPase hydrolysis rate. Involved in the addition of a carboxymethylaminomethyl (cmnm) group at the wobble position (U34) of certain tRNAs, forming tRNA-cmnm(5)s(2)U34. This chain is tRNA modification GTPase MnmE, found in Methylococcus capsulatus (strain ATCC 33009 / NCIMB 11132 / Bath).